Consider the following 388-residue polypeptide: (S)-8-oxocitronellyl enol synthase (388 aa).

Residues 38-40, 66-67, 84-85, 108-109, and Gln-142 each bind NADP(+); these read TGI, RR, DV, and SW. Residues Lys-146 and Tyr-178 contribute to the active site. Substrate-binding residues include Lys-146 and Tyr-178. NADP(+)-binding positions include Tyr-178, Val-204, and 211–213; that span reads SMM. Ser-349 provides a ligand contact to substrate.

The protein belongs to the short-chain dehydrogenases/reductases (SDR) family. Highly divergent. As to quaternary structure, homodimer. Expressed in internal phloem-associated parenchyma (IPAP) cells.

The protein resides in the cytoplasm. The protein localises to the cytosol. It carries out the reaction (S)-8-oxocitronellyl enol + NADP(+) = (6E)-8-oxogeranial + NADPH + H(+). It catalyses the reaction (S)-8-oxocitronellyl enol + NAD(+) = (6E)-8-oxogeranial + NADH + H(+). Iridoid synthase that catalyzes the first step in generation of the iridoid ring scaffold using the linear monoterpene (6E)-8-oxogeranial as substrate. Iridoids comprise a large family of distinctive bicyclic monoterpenes that possess a wide range of pharmacological activities, including anticancer, anti-inflammatory, antifungal and antibacterial activities. This Catharanthus roseus (Madagascar periwinkle) protein is (S)-8-oxocitronellyl enol synthase.